The primary structure comprises 386 residues: Beta-citrylglutamate synthase B (386 aa).

The 186-residue stretch at 119–304 (FQELAGHGVP…VAGIIADYAA (186 aa)) folds into the ATP-grasp domain. ATP contacts are provided by residues Lys158, 193 to 203 (QKYVKESHGRD), and Arg219. Residues Asp264, Glu277, and Asn279 each contribute to the Mg(2+) site. 3 residues coordinate Mn(2+): Asp264, Glu277, and Asn279. The segment at 325–359 (ASETSEPELGPPASTAVDNMSASSSSVDSDPESTE) is disordered. Residues 338–352 (STAVDNMSASSSSVD) show a composition bias toward low complexity.

Belongs to the RimK family. It depends on Mg(2+) as a cofactor. Mn(2+) serves as cofactor.

The protein localises to the cytoplasm. The catalysed reaction is citrate + L-glutamate + ATP = beta-citrylglutamate + ADP + phosphate + H(+). The enzyme catalyses N-acetyl-L-aspartate + L-glutamate + ATP = N-acetyl-L-aspartyl-L-glutamate + ADP + phosphate + H(+). Its function is as follows. Catalyzes the synthesis of beta-citryl-L-glutamate and N-acetyl-L-aspartyl-L-glutamate. Beta-citryl-L-glutamate is synthesized more efficiently than N-acetyl-L-aspartyl-L-glutamate. The chain is Beta-citrylglutamate synthase B (RIMKLB) from Homo sapiens (Human).